The sequence spans 108 residues: Precursor of CEP16 (108 aa).

An N-terminal signal peptide occupies residues 1-27 (MVMAKNLTKFYVVFLVVLMMVVSLLLA). Positions 28-92 (IEGRPVKDSS…VGHHRAKGYK (65 aa)) are excised as a propeptide. Residues N50 and N98 are each glycosylated (N-linked (GlcNAc...) asparagine). The interval 76 to 108 (QSGPSPGVGHHRAKGYKMFGRANDSGPSPGVGH) is disordered. A hydroxyproline mark is found at P102 and P104.

This sequence belongs to the C-terminally encoded plant signaling peptide (CEP) family. In terms of assembly, interacts with CEP receptors (e.g. CEPR1 and CEPR2). The mature small signaling peptide is generated by proteolytic processing of the longer precursor.

Its subcellular location is the secreted. The protein resides in the extracellular space. It localises to the apoplast. Extracellular signaling peptide that may regulate primary root growth rate and systemic nitrogen (N)-demand signaling. In Arabidopsis thaliana (Mouse-ear cress), this protein is Precursor of CEP16.